Reading from the N-terminus, the 430-residue chain is Type 3 secretion system ATPase (430 aa).

162-167 (GCGKTF) contacts ATP.

The protein belongs to the ATPase alpha/beta chains family. T3SS ATPase subfamily. In terms of assembly, the core secretion machinery of the T3SS is composed of approximately 20 different proteins, including cytoplasmic components, a base, an export apparatus and a needle. This subunit is part of the cytosolic complex. Forms homohexamers. Interacts directly with MxiN/SctL (stator protein) and Spa13/SctO (stalk protein). Can form a soluble complex with Spa33/SctQ, MxiN/SctL and MxiK/SctK.

Its subcellular location is the cytoplasm. The catalysed reaction is ATP + H2O + cellular proteinSide 1 = ADP + phosphate + cellular proteinSide 2.. Oligomerization increases ATPase activity. Monomeric forms exhibit low-level ATPase activity by forming short-lived oligomers with active site contributions from at least two protomers. In contrast, oligomers exhibit enhanced ATP hydrolysis rates that likely result from multiple preformed active sites within the oligomeric complex. Oligomerization is important for both enzyme activation and T3SS function. Activity is regulated by MxiN/SctL, which differentially regulates the activity of the monomer and the oligomer: it up-regulates the ATPase activity of the monomer, while it down-regulates the activity of the oligomer. Functionally, ATPase component of the type III secretion system (T3SS), also called injectisome, which is used to inject bacterial effector proteins into eukaryotic host cells. Acts as a molecular motor to provide the energy that is required for the export of proteins. Required for type III secretion apparatus (T3SA) formation, proper protein secretion, host cell invasion and virulence. May play a critical role in T3SS substrate recognition, disassembly of the effector/chaperone complex and unfolding of the effector in an ATP-dependent manner prior to secretion. This Shigella flexneri protein is Type 3 secretion system ATPase.